We begin with the raw amino-acid sequence, 514 residues long: 2-isopropylmalate synthase (514 aa).

The Pyruvate carboxyltransferase domain maps to 5–268; sequence LIIFDTTLRD…DVGIDTTQIV (264 aa). 4 residues coordinate Mn(2+): aspartate 14, histidine 202, histidine 204, and asparagine 239. A regulatory domain region spans residues 395–514; sequence KFVSLSQRSE…KDDKLNPQRA (120 aa).

This sequence belongs to the alpha-IPM synthase/homocitrate synthase family. LeuA type 1 subfamily. In terms of assembly, homodimer. Mn(2+) serves as cofactor.

The protein localises to the cytoplasm. The enzyme catalyses 3-methyl-2-oxobutanoate + acetyl-CoA + H2O = (2S)-2-isopropylmalate + CoA + H(+). It participates in amino-acid biosynthesis; L-leucine biosynthesis; L-leucine from 3-methyl-2-oxobutanoate: step 1/4. Functionally, catalyzes the condensation of the acetyl group of acetyl-CoA with 3-methyl-2-oxobutanoate (2-ketoisovalerate) to form 3-carboxy-3-hydroxy-4-methylpentanoate (2-isopropylmalate). This chain is 2-isopropylmalate synthase, found in Burkholderia cenocepacia (strain HI2424).